The sequence spans 372 residues: 2-aminoethylphosphonate--pyruvate transaminase 2 (372 aa).

The residue at position 192 (Lys192) is an N6-(pyridoxal phosphate)lysine.

Belongs to the class-V pyridoxal-phosphate-dependent aminotransferase family. PhnW subfamily. Homodimer. The cofactor is pyridoxal 5'-phosphate.

It catalyses the reaction (2-aminoethyl)phosphonate + pyruvate = phosphonoacetaldehyde + L-alanine. Its function is as follows. Involved in phosphonate degradation. This chain is 2-aminoethylphosphonate--pyruvate transaminase 2, found in Polaromonas sp. (strain JS666 / ATCC BAA-500).